We begin with the raw amino-acid sequence, 476 residues long: Glycogen synthase (476 aa).

Residue Lys15 participates in ADP-alpha-D-glucose binding.

It belongs to the glycosyltransferase 1 family. Bacterial/plant glycogen synthase subfamily.

It catalyses the reaction [(1-&gt;4)-alpha-D-glucosyl](n) + ADP-alpha-D-glucose = [(1-&gt;4)-alpha-D-glucosyl](n+1) + ADP + H(+). It participates in glycan biosynthesis; glycogen biosynthesis. In terms of biological role, synthesizes alpha-1,4-glucan chains using ADP-glucose. This is Glycogen synthase from Bacillus cereus (strain ATCC 10987 / NRS 248).